A 446-amino-acid polypeptide reads, in one-letter code: MELRTKKTTVMGLAKTGVASARFLAQQGARVTATDMRDETALATVLSELAGLDIRFVLGHHDEADFTAADLVVVSPGVPQEHPLLRKTTEAGVAVVSEIELASRFITAPLVAITGTNGKTTTTTLAGELFRANGFSTYVGGNIGDPLIDLPASGEPVERAVAEISSFQLEWISSFRPKVAALLNITEDHLDRYPSYQAYINAKLRIFENQTADDFAVVNRDDELVWQAAQSLKAQLFPFSRRHELTEGIFSREGELLFRHHGQELSIPTAGFRLQGVHNLENIMAALACCLLLGCQRETSLELLNRFEALHHRMEFVREVADVRYFEDSKATNVGSVAKALESFENITLIAGGKDKGGSYAPLAELVQQRVRHLVLIGEAAERMQQELGDLTATHKAATLEEAVQLSADLTAPGGVVLLSPACSSFDMFKDYEERAQRFITAVKRL.

115–121 contacts ATP; it reads GTNGKTT.

It belongs to the MurCDEF family.

Its subcellular location is the cytoplasm. The enzyme catalyses UDP-N-acetyl-alpha-D-muramoyl-L-alanine + D-glutamate + ATP = UDP-N-acetyl-alpha-D-muramoyl-L-alanyl-D-glutamate + ADP + phosphate + H(+). The protein operates within cell wall biogenesis; peptidoglycan biosynthesis. In terms of biological role, cell wall formation. Catalyzes the addition of glutamate to the nucleotide precursor UDP-N-acetylmuramoyl-L-alanine (UMA). The chain is UDP-N-acetylmuramoylalanine--D-glutamate ligase from Trichlorobacter lovleyi (strain ATCC BAA-1151 / DSM 17278 / SZ) (Geobacter lovleyi).